A 194-amino-acid chain; its full sequence is dTTP/UTP pyrophosphatase (194 aa).

Catalysis depends on D76, which acts as the Proton acceptor.

The protein belongs to the Maf family. YhdE subfamily. The cofactor is a divalent metal cation.

The protein localises to the cytoplasm. The enzyme catalyses dTTP + H2O = dTMP + diphosphate + H(+). The catalysed reaction is UTP + H2O = UMP + diphosphate + H(+). Functionally, nucleoside triphosphate pyrophosphatase that hydrolyzes dTTP and UTP. May have a dual role in cell division arrest and in preventing the incorporation of modified nucleotides into cellular nucleic acids. The chain is dTTP/UTP pyrophosphatase from Shewanella oneidensis (strain ATCC 700550 / JCM 31522 / CIP 106686 / LMG 19005 / NCIMB 14063 / MR-1).